Consider the following 167-residue polypeptide: uncharacterized protein (167 aa).

The segment at 1-21 is disordered; that stretch reads MFDFSFPTPASAGTRMGPASC.

This is an uncharacterized protein from Homo sapiens (Human).